Consider the following 598-residue polypeptide: MDNKKIRNFAIIAHIDHGKSTLADRILEFTNTVSKRDLKEQHLDSMDLEKERGITIKLNAVQIRYNSYIFHLIDTPGHVDFTYEVSRSLAATEGALLLVDASQGIQAQTLANVYLALENNLEIIPIINKIDLPSANVDKVKAEIENTIGISAENAILISAKNGIGIEKVLEAIVNLIPPPQASDEKDPLKALVFDSYFDIYRGVIIFIRVVTGKISVGDTFKFMANNLKFSVIELGISSPNQVKKEALFAGEVGWVAASIRNAKDVEVGDTITLVENPAKSPLPGYKKLVPVMYTGFYPVDSQQYNLLKDSLEKISLSDSSIIYEPESSKALGFGFRIGFLGLLHMEILQERLEREFNLSIIATAPSVEFQITRTNGQVQIISNPSLFPEPNFISEIREPYILAKIFLPEEFLGQIMGLCQDKRGIYVDLEYIDDFRRRLIYKLPLVEVIFDFFDRLKSLSKGYASFEYEVIDYQVSKLQKLDILLNGQKIDALSMIVHKDFAYPKARDLTQKLKEIIPRHSFEVPVQAVIGSKVIARETIKAYRKDVTAKLYGGDVTRRKKLLEKQKAGKKRMKSFGVVDVPQEAFLAILKTNINEK.

The region spanning 4–181 (KKIRNFAIIA…AIVNLIPPPQ (178 aa)) is the tr-type G domain. Residues 16 to 21 (DHGKST) and 128 to 131 (NKID) contribute to the GTP site.

Belongs to the TRAFAC class translation factor GTPase superfamily. Classic translation factor GTPase family. LepA subfamily.

The protein resides in the cell membrane. The catalysed reaction is GTP + H2O = GDP + phosphate + H(+). Functionally, required for accurate and efficient protein synthesis under certain stress conditions. May act as a fidelity factor of the translation reaction, by catalyzing a one-codon backward translocation of tRNAs on improperly translocated ribosomes. Back-translocation proceeds from a post-translocation (POST) complex to a pre-translocation (PRE) complex, thus giving elongation factor G a second chance to translocate the tRNAs correctly. Binds to ribosomes in a GTP-dependent manner. The polypeptide is Elongation factor 4 (Mesomycoplasma hyopneumoniae (strain 232) (Mycoplasma hyopneumoniae)).